Reading from the N-terminus, the 318-residue chain is Solute carrier family 25 member 34 (318 aa).

3 Solcar repeats span residues 18–111, 115–208, and 218–309; these read VSPA…ACQA, QQPG…AKAW, and DSWL…LRKL. 6 helical membrane passes run 21 to 41, 59 to 79, 112 to 134, 184 to 205, 220 to 240, and 292 to 315; these read AVDL…TNPL, TYPR…RADG, GLTQ…GAFV, VGAA…FTSA, WLAT…VMAP, and LGPH…RAQH.

Belongs to the mitochondrial carrier (TC 2.A.29) family.

The protein resides in the mitochondrion inner membrane. It carries out the reaction a dicarboxylate(in) + sulfate(out) = a dicarboxylate(out) + sulfate(in). Functionally, putative antiporter that exchanges dicarboxylates and sulfur oxoanions across the inner membrane of mitochondria. The sequence is that of Solute carrier family 25 member 34 (Slc25a34) from Rattus norvegicus (Rat).